A 1202-amino-acid chain; its full sequence is DNA-directed RNA polymerase subunit beta (1202 aa).

It belongs to the RNA polymerase beta chain family. The RNAP catalytic core consists of 2 alpha, 1 beta, 1 beta' and 1 omega subunit. When a sigma factor is associated with the core the holoenzyme is formed, which can initiate transcription.

It catalyses the reaction RNA(n) + a ribonucleoside 5'-triphosphate = RNA(n+1) + diphosphate. Its function is as follows. DNA-dependent RNA polymerase catalyzes the transcription of DNA into RNA using the four ribonucleoside triphosphates as substrates. The chain is DNA-directed RNA polymerase subunit beta from Leuconostoc mesenteroides subsp. mesenteroides (strain ATCC 8293 / DSM 20343 / BCRC 11652 / CCM 1803 / JCM 6124 / NCDO 523 / NBRC 100496 / NCIMB 8023 / NCTC 12954 / NRRL B-1118 / 37Y).